We begin with the raw amino-acid sequence, 94 residues long: Sapecin (94 aa).

An N-terminal signal peptide occupies residues 1–23; the sequence is MKSFIVLAVTLCLAAFFMGQSVA. A propeptide spanning residues 24 to 54 is cleaved from the precursor; sequence SPAAAAEESKFVDGLHALKTIEPELHGRYKR. Disulfide bonds link C57–C84, C70–C90, and C74–C92.

This sequence belongs to the invertebrate defensin family. Type 1 subfamily. Hemocytes and fat body.

It is found in the secreted. Sapecins, which are potent bactericidal proteins, are produced in response to injury. Sapecin is cytotoxic to Gram-positive bacteria, and to a lesser extent against Gram-negative bacteria. The protein is Sapecin of Sarcophaga peregrina (Flesh fly).